The primary structure comprises 90 residues: Probable Fe(2+)-trafficking protein (90 aa).

It belongs to the Fe(2+)-trafficking protein family.

Its function is as follows. Could be a mediator in iron transactions between iron acquisition and iron-requiring processes, such as synthesis and/or repair of Fe-S clusters in biosynthetic enzymes. This Methylococcus capsulatus (strain ATCC 33009 / NCIMB 11132 / Bath) protein is Probable Fe(2+)-trafficking protein.